We begin with the raw amino-acid sequence, 162 residues long: Protein snakeskin (162 aa).

At 2–6 (VSVET) the chain is on the cytoplasmic side. The chain crosses the membrane as a helical span at residues 7-27 (VGSIFIKALKLIINLVIIFLY). Topologically, residues 28 to 53 (RWGDGGEFLGIGGTWNLNEEKSADAE) are extracellular. The chain crosses the membrane as a helical span at residues 54-74 (IVASGVMVGFLIYTGCHTIAF). The Cytoplasmic portion of the chain corresponds to 75–88 (AFGTTKHKGELCDT). Residues 89–109 (IMNVVGCIMWIAVGGVALHYW) traverse the membrane as a helical segment. Residues 110–128 (KGYMSDEGFLYVNSERQVG) lie on the Extracellular side of the membrane. A helical membrane pass occupies residues 129-149 (IAMGSLCVIEGALYLLDTVLA). Residues 150–162 (CIHYSKGDTDYTQ) are Cytoplasmic-facing.

As to quaternary structure, forms a complex with Tsp2A and mesh. Interacts with mesh; the interaction may be necessary for the localization of both proteins to the cell apicolateral region.

It is found in the apicolateral cell membrane. It localises to the cell junction. Its subcellular location is the septate junction. Functionally, required for assembly of smooth septate junctions (sSJs), together with mesh and Tsp2A. May be important for barrier function of the midgut epithelium. The sequence is that of Protein snakeskin from Drosophila melanogaster (Fruit fly).